A 429-amino-acid chain; its full sequence is Enolase (429 aa).

Residue Gln162 coordinates (2R)-2-phosphoglycerate. Glu204 (proton donor) is an active-site residue. Positions 241, 286, and 313 each coordinate Mg(2+). Residues Lys338, Arg367, Ser368, and Lys389 each coordinate (2R)-2-phosphoglycerate. Lys338 functions as the Proton acceptor in the catalytic mechanism.

The protein belongs to the enolase family. It depends on Mg(2+) as a cofactor.

The protein resides in the cytoplasm. It localises to the secreted. Its subcellular location is the cell surface. The catalysed reaction is (2R)-2-phosphoglycerate = phosphoenolpyruvate + H2O. It participates in carbohydrate degradation; glycolysis; pyruvate from D-glyceraldehyde 3-phosphate: step 4/5. Functionally, catalyzes the reversible conversion of 2-phosphoglycerate (2-PG) into phosphoenolpyruvate (PEP). It is essential for the degradation of carbohydrates via glycolysis. The sequence is that of Enolase from Shouchella clausii (strain KSM-K16) (Alkalihalobacillus clausii).